The sequence spans 184 residues: MINGTDFSFSLGYWPPAGGFGLNTNILGTNLINLSVVLGVLIYFGKGVLSNLLDDRKQKILSTIRDSEELYKGATDQLEKARARLREVEMRADEIQVNGYSQIEREKEDLINAAHENLERLEDSKNETVNFEQQRAIDQVRQQISRQALRRALGTLNSRLNNELHLRTIDHNISMLRAMKNTTD.

Residues 31 to 53 (LINLSVVLGVLIYFGKGVLSNLL) form a helical membrane-spanning segment.

This sequence belongs to the ATPase B chain family. In terms of assembly, F-type ATPases have 2 components, F(1) - the catalytic core - and F(0) - the membrane proton channel. F(1) has five subunits: alpha(3), beta(3), gamma(1), delta(1), epsilon(1). F(0) has four main subunits: a(1), b(1), b'(1) and c(10-14). The alpha and beta chains form an alternating ring which encloses part of the gamma chain. F(1) is attached to F(0) by a central stalk formed by the gamma and epsilon chains, while a peripheral stalk is formed by the delta, b and b' chains.

The protein localises to the plastid. The protein resides in the chloroplast thylakoid membrane. F(1)F(0) ATP synthase produces ATP from ADP in the presence of a proton or sodium gradient. F-type ATPases consist of two structural domains, F(1) containing the extramembraneous catalytic core and F(0) containing the membrane proton channel, linked together by a central stalk and a peripheral stalk. During catalysis, ATP synthesis in the catalytic domain of F(1) is coupled via a rotary mechanism of the central stalk subunits to proton translocation. Functionally, component of the F(0) channel, it forms part of the peripheral stalk, linking F(1) to F(0). This Cycas taitungensis (Prince sago) protein is ATP synthase subunit b, chloroplastic.